The following is a 1378-amino-acid chain: DNA-directed RNA polymerase subunit beta (1378 aa).

Belongs to the RNA polymerase beta chain family. As to quaternary structure, the RNAP catalytic core consists of 2 alpha, 1 beta, 1 beta' and 1 omega subunit. When a sigma factor is associated with the core the holoenzyme is formed, which can initiate transcription.

It carries out the reaction RNA(n) + a ribonucleoside 5'-triphosphate = RNA(n+1) + diphosphate. Its function is as follows. DNA-dependent RNA polymerase catalyzes the transcription of DNA into RNA using the four ribonucleoside triphosphates as substrates. This is DNA-directed RNA polymerase subunit beta from Campylobacter jejuni (strain RM1221).